The sequence spans 330 residues: Lysophospholipase D GDPD3 (330 aa).

Position 1 (M1) is a topological domain, cytoplasmic. A helical membrane pass occupies residues 2–22 (IPLLYFVLPTLGSYVMLSIFF). Topologically, residues 23–200 (LRRPHLLHTP…ANPEMPMAFT (178 aa)) are extracellular. One can recognise a GP-PDE domain in the interval 39–308 (IRLAAHRGGS…DYPTALRHYL (270 aa)). Residues E71, D73, and H86 each coordinate a divalent metal cation. The helical transmembrane segment at 201-221 (IWRSFWILLLYYLGLLPFVSI) threads the bilayer. Residues 222-330 (PEKFFFCFLP…EALSCLSLKK (109 aa)) lie on the Cytoplasmic side of the membrane. A disordered region spans residues 311-330 (QEEETQPPQPEALSCLSLKK).

Belongs to the glycerophosphoryl diester phosphodiesterase family. As to expression, highly expressed in stomach and kidney. In stomach detected in the glandular epithelium. Predominantly expressed in the stomach (at protein level).

It localises to the membrane. It is found in the cytoplasm. Its subcellular location is the perinuclear region. The protein resides in the endoplasmic reticulum membrane. It carries out the reaction 1-hexadecanoyl-sn-glycero-3-phosphocholine + H2O = 1-hexadecanoyl-sn-glycero-3-phosphate + choline + H(+). The catalysed reaction is 1-O-hexadecyl-sn-glycero-3-phosphocholine + H2O = 1-O-hexadecyl-sn-glycero-3-phosphate + choline + H(+). The enzyme catalyses 1-O-(1Z-octadecenyl)-sn-glycero-3-phospho-N-hexadecanoyl-ethanolamine + H2O = 1-O-(1Z-octadecenyl)-sn-glycero-3-phosphate + N-hexadecanoylethanolamine + H(+). It catalyses the reaction N-(5Z,8Z,11Z,14Z-eicosatetraenoyl)-1-(9Z-octadecenoyl)-sn-glycero-3-phosphoethanolamine + H2O = N-(5Z,8Z,11Z,14Z-eicosatetraenoyl)-ethanolamine + 1-(9Z-octadecenoyl)-sn-glycero-3-phosphate + H(+). It carries out the reaction N,1-di-(9Z-octadecenoyl)-sn-glycero-3-phosphoethanolamine + H2O = N-(9Z-octadecenoyl) ethanolamine + 1-(9Z-octadecenoyl)-sn-glycero-3-phosphate + H(+). The catalysed reaction is N-hexadecanoyl-1-(9Z-octadecenoyl)-sn-glycero-3-phosphoethanolamine + H2O = N-hexadecanoylethanolamine + 1-(9Z-octadecenoyl)-sn-glycero-3-phosphate + H(+). The enzyme catalyses 1-hexadecanoyl-sn-glycero-3-phosphocholine + H2O = sn-glycerol 3-phosphocholine + hexadecanoate + H(+). With respect to regulation, lysophospholipase D activity is stimulated by calcium. Loss of lysophospholipase D activity in presence of EDTA. Its function is as follows. Hydrolyzes lysoglycerophospholipids to produce lysophosphatidic acid (LPA) and the corresponding amines. Shows a preference for 1-O-alkyl-sn-glycero-3-phosphocholine (lyso-PAF), lysophosphatidylcholine (lyso-PC) and N-acylethanolamine lysophospholipids. Does not display glycerophosphodiester phosphodiesterase activity, since it cannot hydrolyze either glycerophosphoinositol or glycerophosphocholine. The chain is Lysophospholipase D GDPD3 from Mus musculus (Mouse).